Consider the following 179-residue polypeptide: Large ribosomal subunit protein uL6 (179 aa).

The protein belongs to the universal ribosomal protein uL6 family. In terms of assembly, part of the 50S ribosomal subunit.

This protein binds to the 23S rRNA, and is important in its secondary structure. It is located near the subunit interface in the base of the L7/L12 stalk, and near the tRNA binding site of the peptidyltransferase center. The protein is Large ribosomal subunit protein uL6 of Parasynechococcus marenigrum (strain WH8102).